Consider the following 692-residue polypeptide: MNRILSKGPRGLNGLLRACPSNFGRSFLCRSTYNVNSRTFWSAPRLRSEDSPSSSQPLKPDPNDGNGNTHRTTSTASSQHTPWYLQEETPIDESRQISSRDQIPELPENSPAILPVLLDYVFKDLGLDELRLLDLRGLETPPPIGANAIMIIGTARSVKHLNVSADRLCRWLRSTYKLTPYADGLLGRNELKIKLRRKARRARVASRAGTTVDEKDDGITTGWICVNAGVVENSPVGEQASRKVEGFGNIVGGTRVVVQMFTEEKRAEVDLEGLWLATIERDRRRRQVSIDTKSDAPHEEVRASTPVQNSSSDHVFGLHSRSSAILPLEQRRGLHSKCRLLGPQTEDNQDDGLDDGLDMSPDSNSTGTDHLAANRTCDKEVATDSLLEHLSGLPDDEALSELGAGQEDTDSTPFLRRFYDALSQMSAEEAAVAQVKLLCTAISRHHLGYSKESLWKAFTTCNYHTYFISDELGIEIVSAMLTALPARQGGPKATGVLPEADRELALRVLEHLSLRGTDILNMKVFHLLYKAASHPTNLSGEEVVKDVTGTTKDRPTSRVAKLIETLDIQFDPEEARKLMMSMFRNEDYDGFWKLWSKLPLNGSPRTSADYEMLFRLHAELGDERRARDCVSTWAPIMSREHPPIPLRGQVVQHIMYCILIAEPAIDRMATAGSTSNLALIWNDCKNNAPARG.

The N-terminal 73 residues, M1–T73, are a transit peptide targeting the mitochondrion. Disordered stretches follow at residues P44 to W83, R286 to H314, and C338 to A373. The span at G65 to T81 shows a compositional bias: polar residues. Residues T292 to R302 are compositionally biased toward basic and acidic residues. A compositionally biased stretch (acidic residues) spans D347 to L357.

It belongs to the ATP25 family.

The protein localises to the mitochondrion inner membrane. Functionally, probable mitochondrial mRNA stabilization factor. The polypeptide is ATPase synthesis protein 25, mitochondrial (atp25) (Neosartorya fischeri (strain ATCC 1020 / DSM 3700 / CBS 544.65 / FGSC A1164 / JCM 1740 / NRRL 181 / WB 181) (Aspergillus fischerianus)).